The primary structure comprises 454 residues: tRNA modification GTPase MnmE (454 aa).

(6S)-5-formyl-5,6,7,8-tetrahydrofolate-binding residues include R23, E80, and K120. In terms of domain architecture, TrmE-type G spans 216–377 (GMKVVIAGRP…LRSHLKEAMG (162 aa)). N226 lines the K(+) pocket. GTP is bound by residues 226-231 (NAGKSS), 245-251 (TDIAGTT), 270-273 (DTAG), and 358-360 (SAR). Position 230 (S230) interacts with Mg(2+). T245, I247, and T250 together coordinate K(+). T251 provides a ligand contact to Mg(2+). K454 is a binding site for (6S)-5-formyl-5,6,7,8-tetrahydrofolate.

Belongs to the TRAFAC class TrmE-Era-EngA-EngB-Septin-like GTPase superfamily. TrmE GTPase family. Homodimer. Heterotetramer of two MnmE and two MnmG subunits. The cofactor is K(+).

Its subcellular location is the cytoplasm. Exhibits a very high intrinsic GTPase hydrolysis rate. Involved in the addition of a carboxymethylaminomethyl (cmnm) group at the wobble position (U34) of certain tRNAs, forming tRNA-cmnm(5)s(2)U34. This Proteus mirabilis (strain HI4320) protein is tRNA modification GTPase MnmE.